The primary structure comprises 639 residues: Homeobox protein 9 (639 aa).

Disordered regions lie at residues 1 to 45, 66 to 144, 157 to 179, 262 to 313, 331 to 422, and 436 to 547; these read MLNS…DKQN, SPNH…DDNS, NQNQNQNQNQNQNQNQNQNQNQN, PRTL…SSGT, SESS…QTSN, and TNKN…NNEN. Positions 72 to 109 form a coiled coil; that stretch reads ANNNNNNNNNNNNNNNNNNNNNNNNNNNNNNNNNNNIQ. 2 stretches are compositionally biased toward low complexity: residues 73 to 119 and 126 to 142; these read NNNN…SNNN and GSLNSSNDNNFNSGNDD. Coiled coils occupy residues 152–184 and 230–296; these read SNQNQNQNQNQNQNQNQNQNQNQNQNQNQKDSW and EIEI…NINE. The segment covering 266-300 has biased composition (low complexity); sequence NNSSDSISENINNNNNNNNNNNNNNNNNINESNIN. Positions 345–354 are enriched in basic and acidic residues; sequence QPRKVPRDLN. A compositionally biased stretch (low complexity) spans 358–399; sequence NNNINYANNNNNNNNNNNNNNHNNNINNNNNNNNNNNNNSNN. Positions 365–396 form a coiled coil; it reads NNNNNNNNNNNNNNHNNNINNNNNNNNNNNNN. A compositionally biased stretch (polar residues) spans 405–422; sequence GSITNSVNIKPSKDQTSN. The span at 436-526 shows a compositional bias: low complexity; the sequence is TNKNNNNNNN…NNNLTSSSNN (91 aa). The span at 532–547 shows a compositional bias: polar residues; sequence GNTSPNQSSANGNNEN. Positions 559-621 form a DNA-binding region, homeobox; it reads KRKKRGKLPG…NARRRILPRQ (63 aa).

Its subcellular location is the nucleus. Its function is as follows. Putative transcription factor. In Dictyostelium discoideum (Social amoeba), this protein is Homeobox protein 9 (hbx9).